We begin with the raw amino-acid sequence, 504 residues long: Glucose-6-phosphate isomerase (504 aa).

The active-site Proton donor is glutamate 333. Catalysis depends on residues histidine 364 and lysine 473.

This sequence belongs to the GPI family.

It localises to the cytoplasm. The catalysed reaction is alpha-D-glucose 6-phosphate = beta-D-fructose 6-phosphate. The protein operates within carbohydrate biosynthesis; gluconeogenesis. Its pathway is carbohydrate degradation; glycolysis; D-glyceraldehyde 3-phosphate and glycerone phosphate from D-glucose: step 2/4. Catalyzes the reversible isomerization of glucose-6-phosphate to fructose-6-phosphate. The polypeptide is Glucose-6-phosphate isomerase (Xanthomonas oryzae pv. oryzae (strain PXO99A)).